The primary structure comprises 205 residues: CASP-like protein 2A1 (205 aa).

Topologically, residues 1 to 35 are cytoplasmic; that stretch reads MMGDKGEKECATASSPIELGCGEGDESGNKSSMRT. The chain crosses the membrane as a helical span at residues 36 to 56; the sequence is VETLLRLVPVALCTVSLVVML. Topologically, residues 57–77 are extracellular; it reads KNSQTNDFGSLSYSDLGAFRY. The chain crosses the membrane as a helical span at residues 78-98; the sequence is LVHANGICAGYSLLSAIFTAM. The Cytoplasmic segment spans residues 99–106; sequence PRPPTMSR. Residues 107–127 traverse the membrane as a helical segment; the sequence is AWTFFLLDQVLTYLILAAGAV. The Extracellular portion of the chain corresponds to 128 to 157; that stretch reads STEVVYLAYKGDEAVTWSDACSSFGGFCQK. The chain crosses the membrane as a helical span at residues 158–178; it reads TTASISITFVTVLCYAVLSLI. Topologically, residues 179–205 are cytoplasmic; that stretch reads SSYKLFSKYDAPICFNGKGIEIAAFHS.

Belongs to the Casparian strip membrane proteins (CASP) family. In terms of assembly, homodimer and heterodimers.

The protein resides in the cell membrane. This Vitis vinifera (Grape) protein is CASP-like protein 2A1.